The following is a 956-amino-acid chain: UvrABC system protein A (956 aa).

An ATP-binding site is contributed by 33–40 (GLSGSGKS). A C4-type zinc finger spans residues 252 to 279 (CPYCGFSVGELEPRMFSFNSPFGACPTC). ABC transporter domains are found at residues 309-587 (WRPI…KNSI) and 607-936 (GNGL…KYLK). 639–646 (GVSGSGKS) serves as a coordination point for ATP. The segment at 738 to 764 (CEACKGDGIIKIEMHFLPDVYVPCEVC) adopts a C4-type zinc-finger fold.

This sequence belongs to the ABC transporter superfamily. UvrA family. Forms a heterotetramer with UvrB during the search for lesions.

The protein localises to the cytoplasm. The UvrABC repair system catalyzes the recognition and processing of DNA lesions. UvrA is an ATPase and a DNA-binding protein. A damage recognition complex composed of 2 UvrA and 2 UvrB subunits scans DNA for abnormalities. When the presence of a lesion has been verified by UvrB, the UvrA molecules dissociate. The sequence is that of UvrABC system protein A from Listeria monocytogenes serovar 1/2a (strain ATCC BAA-679 / EGD-e).